The sequence spans 335 residues: Transaldolase (335 aa).

Lys135 (schiff-base intermediate with substrate) is an active-site residue.

Belongs to the transaldolase family. Type 1 subfamily. As to quaternary structure, homodimer.

The protein localises to the cytoplasm. The catalysed reaction is D-sedoheptulose 7-phosphate + D-glyceraldehyde 3-phosphate = D-erythrose 4-phosphate + beta-D-fructose 6-phosphate. The protein operates within carbohydrate degradation; pentose phosphate pathway; D-glyceraldehyde 3-phosphate and beta-D-fructose 6-phosphate from D-ribose 5-phosphate and D-xylulose 5-phosphate (non-oxidative stage): step 2/3. Functionally, transaldolase is important for the balance of metabolites in the pentose-phosphate pathway. In Prochlorococcus marinus (strain SARG / CCMP1375 / SS120), this protein is Transaldolase.